The following is a 363-amino-acid chain: Small ribosomal subunit biogenesis GTPase RsgA (363 aa).

Residues 112–268 form the CP-type G domain; sequence HQQVIAANID…LIDTPGMREL (157 aa). GTP is bound by residues 157–160 and 210–218; these read TKAD and GSSGAGKST. Zn(2+) is bound by residues Cys291, Cys296, His298, and Cys304. The interval 340 to 363 is disordered; it reads RVAQNNRGKGSGKRPASVDRPGRR.

Belongs to the TRAFAC class YlqF/YawG GTPase family. RsgA subfamily. Monomer. Associates with 30S ribosomal subunit, binds 16S rRNA. Requires Zn(2+) as cofactor.

Its subcellular location is the cytoplasm. In terms of biological role, one of several proteins that assist in the late maturation steps of the functional core of the 30S ribosomal subunit. Helps release RbfA from mature subunits. May play a role in the assembly of ribosomal proteins into the subunit. Circularly permuted GTPase that catalyzes slow GTP hydrolysis, GTPase activity is stimulated by the 30S ribosomal subunit. The chain is Small ribosomal subunit biogenesis GTPase RsgA from Xanthomonas euvesicatoria pv. vesicatoria (strain 85-10) (Xanthomonas campestris pv. vesicatoria).